A 127-amino-acid chain; its full sequence is Aspartate 1-decarboxylase (127 aa).

Catalysis depends on S25, which acts as the Schiff-base intermediate with substrate; via pyruvic acid. S25 is modified (pyruvic acid (Ser)). T57 contacts substrate. Residue Y58 is the Proton donor of the active site. 73–75 (GAA) is a substrate binding site.

Belongs to the PanD family. As to quaternary structure, heterooctamer of four alpha and four beta subunits. Pyruvate is required as a cofactor. In terms of processing, is synthesized initially as an inactive proenzyme, which is activated by self-cleavage at a specific serine bond to produce a beta-subunit with a hydroxyl group at its C-terminus and an alpha-subunit with a pyruvoyl group at its N-terminus.

It localises to the cytoplasm. It catalyses the reaction L-aspartate + H(+) = beta-alanine + CO2. Its pathway is cofactor biosynthesis; (R)-pantothenate biosynthesis; beta-alanine from L-aspartate: step 1/1. In terms of biological role, catalyzes the pyruvoyl-dependent decarboxylation of aspartate to produce beta-alanine. In Bacillus pumilus (strain SAFR-032), this protein is Aspartate 1-decarboxylase.